Consider the following 366-residue polypeptide: Ribosomal RNA large subunit methyltransferase M (366 aa).

Residues Ser188, 221 to 224, Asp240, Asp260, and Asp277 contribute to the S-adenosyl-L-methionine site; that span reads CPGG. Lys306 serves as the catalytic Proton acceptor.

It belongs to the class I-like SAM-binding methyltransferase superfamily. RNA methyltransferase RlmE family. RlmM subfamily. Monomer.

Its subcellular location is the cytoplasm. The catalysed reaction is cytidine(2498) in 23S rRNA + S-adenosyl-L-methionine = 2'-O-methylcytidine(2498) in 23S rRNA + S-adenosyl-L-homocysteine + H(+). Functionally, catalyzes the 2'-O-methylation at nucleotide C2498 in 23S rRNA. The protein is Ribosomal RNA large subunit methyltransferase M of Klebsiella pneumoniae subsp. pneumoniae (strain ATCC 700721 / MGH 78578).